The sequence spans 332 residues: Anthranilate phosphoribosyltransferase (332 aa).

5-phospho-alpha-D-ribose 1-diphosphate is bound by residues Gly79, 82–83 (GD), Ser87, 89–92 (NIST), 107–115 (KHGNRSVSS), and Ser119. Residue Gly79 participates in anthranilate binding. Residue Ser91 participates in Mg(2+) binding. Residue Asn110 participates in anthranilate binding. Arg165 serves as a coordination point for anthranilate. 2 residues coordinate Mg(2+): Asp223 and Glu224.

Belongs to the anthranilate phosphoribosyltransferase family. Homodimer. Mg(2+) serves as cofactor.

The catalysed reaction is N-(5-phospho-beta-D-ribosyl)anthranilate + diphosphate = 5-phospho-alpha-D-ribose 1-diphosphate + anthranilate. Its pathway is amino-acid biosynthesis; L-tryptophan biosynthesis; L-tryptophan from chorismate: step 2/5. Functionally, catalyzes the transfer of the phosphoribosyl group of 5-phosphorylribose-1-pyrophosphate (PRPP) to anthranilate to yield N-(5'-phosphoribosyl)-anthranilate (PRA). The sequence is that of Anthranilate phosphoribosyltransferase from Yersinia pseudotuberculosis serotype O:3 (strain YPIII).